The sequence spans 344 residues: Glyceraldehyde-3-phosphate dehydrogenase (344 aa).

Residues 11–12 and Gly110 each bind NAD(+); that span reads TI. 139–141 contacts D-glyceraldehyde 3-phosphate; that stretch reads SCN. Cys140 functions as the Nucleophile in the catalytic mechanism. Arg169 lines the NAD(+) pocket. 195 to 196 lines the D-glyceraldehyde 3-phosphate pocket; it reads HG. Gln302 serves as a coordination point for NAD(+).

Belongs to the glyceraldehyde-3-phosphate dehydrogenase family. As to quaternary structure, homotetramer.

The protein resides in the cytoplasm. The enzyme catalyses D-glyceraldehyde 3-phosphate + phosphate + NADP(+) = (2R)-3-phospho-glyceroyl phosphate + NADPH + H(+). It carries out the reaction D-glyceraldehyde 3-phosphate + phosphate + NAD(+) = (2R)-3-phospho-glyceroyl phosphate + NADH + H(+). Its pathway is carbohydrate degradation; glycolysis; pyruvate from D-glyceraldehyde 3-phosphate: step 1/5. This is Glyceraldehyde-3-phosphate dehydrogenase from Pyrobaculum neutrophilum (strain DSM 2338 / JCM 9278 / NBRC 100436 / V24Sta) (Thermoproteus neutrophilus).